Here is a 259-residue protein sequence, read N- to C-terminus: MGAPGAAEARERIRRGEHAGPTAGLAPGYAQANLVILPEEHALDFLRFCVRNPKPCPLLEVTDTGSPVPRTLAPGADLRTDVPRYRVYERGKLVEEPADILPRWRGDLVCFLLGCSFTFERALLAAGLRLAHVEQGRNVPMYVTNRRCAPSGPFAGPLVVSMRPYRPEEVPRAVSVSARYPAMHGAPVHVGRPEALGIKDLGRPDFGDAVILGEGEIPVFWACGVTPQAVALQAGLPLVITHSPGHMFVTDRRDAEYEV.

The interval 1–24 (MGAPGAAEARERIRRGEHAGPTAG) is disordered. A compositionally biased stretch (basic and acidic residues) spans 8–18 (EARERIRRGEH).

Belongs to the D-glutamate cyclase family.

This Rubrobacter xylanophilus (strain DSM 9941 / JCM 11954 / NBRC 16129 / PRD-1) protein is Putative hydro-lyase Rxyl_2409.